The sequence spans 264 residues: Small ribosomal subunit protein uS2 (264 aa).

This sequence belongs to the universal ribosomal protein uS2 family.

This chain is Small ribosomal subunit protein uS2, found in Helicobacter pylori (strain Shi470).